The primary structure comprises 78 residues: RNA-binding protein Hfq (78 aa).

Positions 10-69 (DPFLNALRKEHVPVSIYLVNGIKLQGNIESFDQYVVLLRNTVTQMVYKHAISTVVPARPV) constitute a Sm domain.

Belongs to the Hfq family. Homohexamer.

Its function is as follows. RNA chaperone that binds small regulatory RNA (sRNAs) and mRNAs to facilitate mRNA translational regulation in response to envelope stress, environmental stress and changes in metabolite concentrations. Also binds with high specificity to tRNAs. This is RNA-binding protein Hfq from Paraburkholderia phymatum (strain DSM 17167 / CIP 108236 / LMG 21445 / STM815) (Burkholderia phymatum).